The following is a 181-amino-acid chain: Ferritin BfrB (181 aa).

The 146-residue stretch at G5–G150 folds into the Ferritin-like diiron domain. Residue K10 forms an Isoglutamyl lysine isopeptide (Lys-Gln) (interchain with Q-Cter in protein Pup) linkage. Positions 22, 55, 58, 99, and 132 each coordinate Fe cation.

This sequence belongs to the ferritin family. Prokaryotic subfamily. Homooligomer of 24 subunits that are packed together to form an approximately spherical molecule with a central cavity, in which large amounts of iron can be stored.

The catalysed reaction is 4 Fe(2+) + O2 + 4 H(+) = 4 Fe(3+) + 2 H2O. Its function is as follows. Iron-storage protein that displays ferroxidase activity, catalyzing the oxidation of Fe(2+) ions into Fe(3+) ions, that can then be deposited as a ferric-oxide mineral core within the central cavity of the protein complex. The protein is Ferritin BfrB (bfrB) of Mycolicibacterium smegmatis (strain ATCC 700084 / mc(2)155) (Mycobacterium smegmatis).